The sequence spans 603 residues: Putative ankyrin repeat protein FPV162 (603 aa).

ANK repeat units follow at residues 23–53 (FKDTPLHKAVMLPDAVERIRMFVSKGADINV), 57–87 (FKKTALHYAAKKLATPEVLKTLIYLGTNVNV), 91–120 (FESTPLHYAVQENGLEATKKLLDLGADPNT), 124–155 (NGQTPLHCAAMVIPDGPELVRILVEYGANVNA), 159–189 (KHNTPLALAAELSNTNKTIETLIELGADVKI), 193–223 (DGITPLHLAAKSSSDSKTVETLILHGADVNA), 227–257 (EGNTPLHDAATSYELSNTIEMLIEYGAEVNA), 261–291 (VGDTPLHCAARSRNPVHKLKTLIAHGSNVNA), 295–325 (ISVTPLHLATYSDNATEALKVLIEHGAEVNS), 329–362 (YGRTPMHYISRSYSSQSLKTAVELLVEHGADIEA), 366–397 (IGGTPLSSACNNIEYDLRLIECFIEYGADINT), 401–428 (RDETPLYSAIKYPEIVNLLMNYSASTNI), 432–467 (SNITPLESAIANCIGSAEIIVTQIILDAFRFPDIKN), and 504–533 (NNMYGLDIFIRSNNINLLSSLVSNVEDIYL).

This is Putative ankyrin repeat protein FPV162 from Vertebrata (FPV).